We begin with the raw amino-acid sequence, 561 residues long: DNA ligase B (561 aa).

Lysine 124 functions as the N6-AMP-lysine intermediate in the catalytic mechanism.

This sequence belongs to the NAD-dependent DNA ligase family. LigB subfamily.

The catalysed reaction is NAD(+) + (deoxyribonucleotide)n-3'-hydroxyl + 5'-phospho-(deoxyribonucleotide)m = (deoxyribonucleotide)n+m + AMP + beta-nicotinamide D-nucleotide.. Its function is as follows. Catalyzes the formation of phosphodiester linkages between 5'-phosphoryl and 3'-hydroxyl groups in double-stranded DNA using NAD as a coenzyme and as the energy source for the reaction. This is DNA ligase B from Cronobacter sakazakii (strain ATCC BAA-894) (Enterobacter sakazakii).